Here is a 63-residue protein sequence, read N- to C-terminus: Putative ankyrin repeat protein RF_p14 (63 aa).

ANK repeat units lie at residues 11–43 (KLNQ…CRDH) and 44–63 (QGDT…ILDI).

The sequence is that of Putative ankyrin repeat protein RF_p14 from Rickettsia felis (strain ATCC VR-1525 / URRWXCal2) (Rickettsia azadi).